The sequence spans 663 residues: MVMSWLIITEKDNTARRIASILFKDVKTLKKGRVSYYHSPSNDAYVVGLKGHIVELDFPKELNNWTKTPLEKLLQAELVKKVKERTISSILKEIAKKADRVTVATDYDREGELIGVEALEIVKSVNPTVKVDRVRYSAVTEKEIRSAFSKPVKVDFNLANAALARQKIDLIWGATLTRLISVHSGRMGKDFLSVGRVQTPTLRLIVDRELEIQNFKPEKYYEIFAEFEGFIAKHPKRYGSKEEAEKLFAKIGETAKVEEFTRRRMEENRPTPFNTTEFLREASKFMSPHKAMNIAETLYMNGYISYPRTDNTVYPPTINLIEIVSALSSVFPREAQIVLSQDKITPSRGRRETKDHPPIYPTGVAKRGELSKDEWTIYELVVRRFLATLAPKAVWDVRRVVLDSNGVKFVANGRQLVEAGWRDIYIYSKAEETELPLLKKGDVLRILKKRLEEKETKPPGRYSASSLIKMMEKLNLGTKSTRHEIIQKLVSRRYIHGNPFRPSETAFSVINVLKETAETITLPDMTAKLENEMDLIAEGKKREPEVVDESREMLLQILRAIDYRKLSKDLREGVKKDKIVGKCPECGGELVVRQSKAGKRFIGCSNYPDCTFTLPLPQNGTLYITAKQCKEHEIKEVKIRTKKGYWNLGCPYCNYLNWKKENS.

A Toprim domain is found at Ser-4 to Ser-137. Positions 10 and 106 each coordinate Mg(2+). The Topo IA-type catalytic domain maps to Asp-155–Leu-558. The interval Ser-193–Gln-198 is interaction with DNA. Tyr-306 acts as the O-(5'-phospho-DNA)-tyrosine intermediate in catalysis. The C4-type 1 zinc finger occupies Cys-583–Cys-610. The segment at Cys-629–Cys-653 adopts a C4-type 2; atypical zinc-finger fold.

The protein belongs to the type IA topoisomerase family. As to quaternary structure, monomer. Mg(2+) serves as cofactor.

It carries out the reaction ATP-independent breakage of single-stranded DNA, followed by passage and rejoining.. Its function is as follows. Releases the supercoiling and torsional tension of DNA, which is introduced during the DNA replication and transcription, by transiently cleaving and rejoining one strand of the DNA duplex. Introduces a single-strand break via transesterification at a target site in duplex DNA. The scissile phosphodiester is attacked by the catalytic tyrosine of the enzyme, resulting in the formation of a DNA-(5'-phosphotyrosyl)-enzyme intermediate and the expulsion of a 3'-OH DNA strand. The free DNA strand then undergoes passage around the unbroken strand, thus removing DNA supercoils. Finally, in the religation step, the DNA 3'-OH attacks the covalent intermediate to expel the active-site tyrosine and restore the DNA phosphodiester backbone. This Archaeoglobus fulgidus (strain ATCC 49558 / DSM 4304 / JCM 9628 / NBRC 100126 / VC-16) protein is DNA topoisomerase 1.